A 683-amino-acid chain; its full sequence is Boron transporter 4 (683 aa).

At 1 to 38 (MEEERVDSSKRLFRGIVADLRGRALCYKEDWVAGLRSG) the chain is on the cytoplasmic side. A helical membrane pass occupies residues 39 to 59 (FGILAPTTYIFFASALPVIAF). Residues 60–80 (GEQLSRDTEGALSTVETLAST) lie on the Extracellular side of the membrane. The chain crosses the membrane as a helical span at residues 81 to 101 (ALCGVIHSILGGQPLLILGVA). The Cytoplasmic portion of the chain corresponds to 102–126 (EPTVLMYVYLYNFAIGRPELGKQLY). The chain crosses the membrane as a helical span at residues 127–147 (LAWAAWVCVWTALLLFVMAIL). Topologically, residues 148–160 (NTADIINRFTRVA) are extracellular. A helical transmembrane segment spans residues 161–181 (GELFGMLISVLFIQQAIKGMV). Residues 182–200 (SEFGMPKDEDSKLEKYKFE) are Cytoplasmic-facing. Residues 201 to 221 (WLYTNGLLGLIFTFGLLYTAL) traverse the membrane as a helical segment. The Extracellular portion of the chain corresponds to 222–238 (KSRKARSWRYGTGWYRS). The helical transmembrane segment at 239–259 (FIADYGVPLMVVVWTALSFST) threads the bilayer. The Cytoplasmic portion of the chain corresponds to 260-294 (PSKLPSGVPRRLFSPLPWDSPSLSHWTVIKDMGKV). The chain crosses the membrane as a helical span at residues 295–315 (SPGYIFAAFIPALMIAGLYFF). The Extracellular segment spans residues 316–335 (DHSVASQLAQQKEFNLKKPS). The helical transmembrane segment at 336-356 (AYHYDILLLGFMTLICGLLGL) threads the bilayer. The Cytoplasmic segment spans residues 357 to 477 (PPSNGVLPQS…EQRVSNLLQS (121 aa)). A helical membrane pass occupies residues 478–498 (LLVAGAVLAMPAIKLIPTSIL). At 499–565 (WGYFAYMAID…QIFYFGLCYG (67 aa)) the chain is on the extracellular side. A helical transmembrane segment spans residues 566 to 586 (VTWIPVAGIMFPVPFFLLIAI). The Cytoplasmic portion of the chain corresponds to 587 to 683 (RQYILPKLFN…GDGDMSTTRE (97 aa)). Disordered stretches follow at residues 617-638 (NPLE…GDAE) and 661-683 (KGNQ…TTRE).

This sequence belongs to the anion exchanger (TC 2.A.31.3) family. As to expression, expressed in the distal sides of epidermal cells in the elongation zone of roots.

The protein localises to the membrane. In terms of biological role, efflux-type boron transporter polarly localized in roots. Boron is essential for maintaining the integrity of plants cell walls. This Arabidopsis thaliana (Mouse-ear cress) protein is Boron transporter 4 (BOR4).